The following is a 142-amino-acid chain: Hemoglobin subunit alpha (142 aa).

A Globin domain is found at 2–142 (VLSPADKSNV…VSTVLTSKYR (141 aa)). Ser4 carries the phosphoserine modification. N6-succinyllysine occurs at positions 8 and 12. Lys17 carries the N6-acetyllysine; alternate modification. Lys17 is modified (N6-succinyllysine; alternate). A Phosphotyrosine modification is found at Tyr25. Ser36 carries the phosphoserine modification. Position 41 is an N6-succinyllysine (Lys41). Phosphoserine is present on Ser50. His59 is a binding site for O2. His88 is a binding site for heme b. Ser103 carries the phosphoserine modification. A Phosphothreonine modification is found at Thr109. Position 125 is a phosphoserine (Ser125). Phosphothreonine is present on residues Thr135 and Thr138. Ser139 is modified (phosphoserine).

It belongs to the globin family. Heterotetramer of two alpha chains and two beta chains. Red blood cells.

In terms of biological role, involved in oxygen transport from the lung to the various peripheral tissues. Hemopressin acts as an antagonist peptide of the cannabinoid receptor CNR1. Hemopressin-binding efficiently blocks cannabinoid receptor CNR1 and subsequent signaling. The sequence is that of Hemoglobin subunit alpha (HBA) from Ursus maritimus (Polar bear).